Consider the following 456-residue polypeptide: NADPH-ferredoxin reductase FprA (456 aa).

FAD-binding residues include serine 17, glutamate 43, leucine 51, and valine 87. NADP(+)-binding positions include arginine 113, 158-161, 202-203, and glutamate 214; these read NGNV and RR. FAD contacts are provided by residues tryptophan 362 and 369–371; that span reads GVI. Residue glycine 369 coordinates NADP(+).

Belongs to the ferredoxin--NADP reductase type 1 family. Monomer. It depends on FAD as a cofactor.

It carries out the reaction 2 reduced [2Fe-2S]-[ferredoxin] + NADP(+) + H(+) = 2 oxidized [2Fe-2S]-[ferredoxin] + NADPH. In terms of biological role, may serve as electron transfer protein and supply electrons to P450 systems. The protein is NADPH-ferredoxin reductase FprA (fprA) of Mycobacterium leprae (strain TN).